A 404-amino-acid chain; its full sequence is Formate-dependent phosphoribosylglycinamide formyltransferase (404 aa).

N(1)-(5-phospho-beta-D-ribosyl)glycinamide contacts are provided by residues 25 to 26 and E85; that span reads EL. ATP is bound by residues R118, K159, 164–169, 199–202, and E207; these read SSGKGQ and EGFI. Positions 123 to 318 constitute an ATP-grasp domain; it reads RLAAEELGLP…EFELHARAIL (196 aa). Residues E277 and E289 each contribute to the Mg(2+) site. N(1)-(5-phospho-beta-D-ribosyl)glycinamide-binding positions include D296, K365, and 372 to 373; that span reads RR.

The protein belongs to the PurK/PurT family. As to quaternary structure, homodimer.

The catalysed reaction is N(1)-(5-phospho-beta-D-ribosyl)glycinamide + formate + ATP = N(2)-formyl-N(1)-(5-phospho-beta-D-ribosyl)glycinamide + ADP + phosphate + H(+). Its pathway is purine metabolism; IMP biosynthesis via de novo pathway; N(2)-formyl-N(1)-(5-phospho-D-ribosyl)glycinamide from N(1)-(5-phospho-D-ribosyl)glycinamide (formate route): step 1/1. Its function is as follows. Involved in the de novo purine biosynthesis. Catalyzes the transfer of formate to 5-phospho-ribosyl-glycinamide (GAR), producing 5-phospho-ribosyl-N-formylglycinamide (FGAR). Formate is provided by PurU via hydrolysis of 10-formyl-tetrahydrofolate. This is Formate-dependent phosphoribosylglycinamide formyltransferase from Burkholderia pseudomallei (strain 668).